Consider the following 404-residue polypeptide: Starvation-sensing protein RspA (404 aa).

It belongs to the mandelate racemase/muconate lactonizing enzyme family.

In terms of biological role, probably involved in the degradation of homoserine lactone (HSL) or of a metabolite of HSL that signals starvation. This is Starvation-sensing protein RspA from Escherichia coli (strain K12).